Reading from the N-terminus, the 646-residue chain is MVQKYESPVRIYKYPFELVMAAYERRFPTCPQMPIVLDCEIIDDAETDNGAKRETKRRCKLAVDAPYLFKKIIGIDVAYFIQTNFLDLKTRTLNIEAINETFSSRIEIFEKCRYYAHPENPDWTCFDQVATLDIKNFFGFEHSMEKMGMKQYSQTTQKGKEIIEYFINELKKEGISHVDRWKEDETTEPAATATTTVSISSEKPPLTRDNSILDADYIATYLGQLSPLQESKLVQFRKKIEETNHEGKVPDYQTLLRFLRARDFSIEKAASMLQESLQWREEHRIDDILGEYKTPVVVEKYFPGGWHHHDKDGRPLYILRLGNMDVKGLLKSVGEDELLKLTLHICEEGLKLMKEATKLFGKPIWNWCLLVDLDGLSMRHLWRPGVKALLRIIETVEKNYPETMGRVLIVRAPRVFPVLWTIVSAFIDENTRSKFLFFGGPDCLHIEDGLEHYIPTEKIPSFLGGSCITMIHEGGLIPKHLYKSESVEEHNGVPHGHEHHGLYKSVDLKPGQMFELVIKNTDPKSVLTWDIDVLKNDILFALYRTDKDLEQSFNDSFSSVFDNADMKEGVHYTRLEEKVRCKPKEGVQGSHEMATAGTYVLQWMCPPSCDGPAQLMYFHEILSSANYKGSMTSLQSGFSSNSLQSR.

Positions 2–175 constitute a PRELI/MSF1 domain; it reads VQKYESPVRI…FINELKKEGI (174 aa). A CRAL-TRIO domain is found at 294–471; that stretch reads TPVVVEKYFP…FLGGSCITMI (178 aa). The 148-residue stretch at 499–646 folds into the GOLD domain; sequence HHGLYKSVDL…GFSSNSLQSR (148 aa).

It is found in the mitochondrion. This Aedes aegypti (Yellowfever mosquito) protein is Protein real-time.